A 155-amino-acid chain; its full sequence is V-type proton ATPase 16 kDa proteolipid subunit c (155 aa).

The Lumenal segment spans residues 1 to 10 (MSEAKNGPEY). The helical transmembrane segment at 11-33 (ASFFAVMGASAAMVFSALGAAYG) threads the bilayer. Residues 34–55 (TAKSGTGIAAMSVMRPEMIMKS) are Cytoplasmic-facing. A helical membrane pass occupies residues 56–76 (IIPVVMAGIIAIYGLVVAVLI). The Lumenal portion of the chain corresponds to 77-92 (ANSLNDGISLYRSFLQ). A helical membrane pass occupies residues 93–114 (LGAGLSVGLSGLAAGFAIGIVG). The Cytoplasmic segment spans residues 115-131 (DAGVRGTAQQPRLFVGM). The helical transmembrane segment at 132 to 152 (ILILIFAEVLGLYGLIVALIL) threads the bilayer. Over 153-155 (STK) the chain is Lumenal.

Belongs to the V-ATPase proteolipid subunit family. V-ATPase is a heteromultimeric enzyme made up of two complexes: the ATP-hydrolytic V1 complex and the proton translocation V0 complex. The V1 complex consists of three catalytic AB heterodimers that form a heterohexamer, three peripheral stalks each consisting of EG heterodimers, one central rotor including subunits D and F, and the regulatory subunits C and H. The proton translocation complex V0 consists of the proton transport subunit a, a ring of proteolipid subunits c9c'', rotary subunit d, subunits e and f, and the accessory subunits ATP6AP1/Ac45 and ATP6AP2/PRR. Interacts with the V0 complex V-ATPase subunit a4 ATP6V0A4. Interacts with LASS2. Interacts with RNF182; this interaction leads to ubiquitination and degradation via the proteasome pathway. Post-translationally, ubiquitinated by RNF182, leading to its degradation via the ubiquitin-proteasome pathway. In terms of tissue distribution, expressed in brain (at protein level).

Its subcellular location is the cytoplasmic vesicle. It is found in the clathrin-coated vesicle membrane. The protein localises to the secretory vesicle. The protein resides in the synaptic vesicle membrane. In terms of biological role, proton-conducting pore forming subunit of the V0 complex of vacuolar(H+)-ATPase (V-ATPase), a multisubunit enzyme composed of a peripheral complex (V1) that hydrolyzes ATP and a membrane integral complex (V0) that translocates protons. V-ATPase is responsible for acidifying and maintaining the pH of intracellular compartments and in some cell types, is targeted to the plasma membrane, where it is responsible for acidifying the extracellular environment. In Bos taurus (Bovine), this protein is V-type proton ATPase 16 kDa proteolipid subunit c (ATP6V0C).